A 284-amino-acid chain; its full sequence is NAD kinase (284 aa).

Asp-67 functions as the Proton acceptor in the catalytic mechanism. Residues 67–68, 141–142, Arg-152, Lys-169, Asp-171, 182–187, and Gln-241 each bind NAD(+); these read DG, ND, and TGYSLS.

This sequence belongs to the NAD kinase family. The cofactor is a divalent metal cation.

It is found in the cytoplasm. The enzyme catalyses NAD(+) + ATP = ADP + NADP(+) + H(+). Functionally, involved in the regulation of the intracellular balance of NAD and NADP, and is a key enzyme in the biosynthesis of NADP. Catalyzes specifically the phosphorylation on 2'-hydroxyl of the adenosine moiety of NAD to yield NADP. This is NAD kinase from Geotalea daltonii (strain DSM 22248 / JCM 15807 / FRC-32) (Geobacter daltonii).